The sequence spans 204 residues: Holliday junction branch migration complex subunit RuvA (204 aa).

Residues 1-64 form a domain I region; it reads MIGKLKGTLE…EEAIRLFGFA (64 aa). A domain II region spans residues 65 to 143; the sequence is TRAEQEWFCM…PFEQAVKTVS (79 aa). Residues 144–154 are flexible linker; that stretch reads VPQREITHQPA. Residues 154 to 204 form a domain III region; sequence AHDALSALMKLGFEREQAARALALAMNALEGEAVSSALLIRHSLKLLSSPT.

The protein belongs to the RuvA family. As to quaternary structure, homotetramer. Forms an RuvA(8)-RuvB(12)-Holliday junction (HJ) complex. HJ DNA is sandwiched between 2 RuvA tetramers; dsDNA enters through RuvA and exits via RuvB. An RuvB hexamer assembles on each DNA strand where it exits the tetramer. Each RuvB hexamer is contacted by two RuvA subunits (via domain III) on 2 adjacent RuvB subunits; this complex drives branch migration. In the full resolvosome a probable DNA-RuvA(4)-RuvB(12)-RuvC(2) complex forms which resolves the HJ.

It localises to the cytoplasm. Its function is as follows. The RuvA-RuvB-RuvC complex processes Holliday junction (HJ) DNA during genetic recombination and DNA repair, while the RuvA-RuvB complex plays an important role in the rescue of blocked DNA replication forks via replication fork reversal (RFR). RuvA specifically binds to HJ cruciform DNA, conferring on it an open structure. The RuvB hexamer acts as an ATP-dependent pump, pulling dsDNA into and through the RuvAB complex. HJ branch migration allows RuvC to scan DNA until it finds its consensus sequence, where it cleaves and resolves the cruciform DNA. The polypeptide is Holliday junction branch migration complex subunit RuvA (Bartonella tribocorum (strain CIP 105476 / IBS 506)).